Here is a 108-residue protein sequence, read N- to C-terminus: Vitelline membrane protein 15a-1 (108 aa).

The signal sequence occupies residues 1–18 (MNKFIILAIFALAVGAMA). Residues 52 to 88 (HAPHAKCGANLLVGCAPSVAHVPCVPLPGHAPAHGYG) enclose the VM domain. The interval 87–108 (YGHAPAPHYRAPESDSFDQFEE) is disordered.

This sequence belongs to the vitelline membrane family. As to expression, expressed in the middle and posterior regions of the follicle cells.

The protein resides in the secreted. The sequence is that of Vitelline membrane protein 15a-1 from Aedes aegypti (Yellowfever mosquito).